We begin with the raw amino-acid sequence, 876 residues long: MSKSTAEIRQAFLDFFHSKGHQVVASSSLVPNNDPTLLFTNAGMNQFKDVFLGLDKRNYSRATTSQRCVRAGGKHNDLENVGYTARHHTFFEMLGNFSFGDYFKHDAIQFAWELLTGENWFALPKERLWVTVYETDDETYEIWEKEVGIPRERIIRIGDNKGAPYASDNFWQMGDTGPCGPCTEIFYDHGDHIWGGPPGSPEEDGDRYIEIWNIVFMQFNRQADGTMEPLPKPSVDTGMGLERIAAVLQHVNSNYDIDLFRTLIEAVAKVTGATDLGNKSLRVIADHIRSCAFLVADGVLPSNENRGYVLRRIIRRAVRHGNMLGAKETFFYKLVGPLIEVMGSAGEELKRQQAQVEQVLKTEEEQFARTLERGLALLDEELAKLQGDTLDGETAFRLYDTYGFPVDLTADVCRERNIKVDEVGFEAAMEEQRRRAREASGFGADYNAMIRVDSASEFKGYDHLELNGKVTALFVDGKAVEAINAGQEAVVVLDQTPFYAESGGQVGDKGELKGAGFTFAVDDTQKYGQAIGHIGKLSAGALKVGDAVQADVDEARRARIRLNHSATHLMHAALRQVLGTHVAQKGSLVSDKVLRFDFSHNEAMKPSEIRQVEDLVNAQIRRNLPIETNIMDLDAAKAKGAMALFGEKYDERVRVLSMGDFSTELCGGTHASRTGDIGLFRIISESGTAAGIRRIEAVTGEGAMATVHAQSDRLNDIAHLLKGDSQNLGDKVRAVLERTRQLEKELQQLKDQAAAQESANLSSKAVDLNGVKLLVSELAGIEPKMLRTMVDDLKNQLVSTVIVLATVVEGKVSLIAGVSKDVTDRVKAGELIGMVAQQVGGKGGGRPDMAQAGGTDAAALPAALASVQGWVSAKLQ.

Residues H564, H568, C666, and H670 each contribute to the Zn(2+) site.

It belongs to the class-II aminoacyl-tRNA synthetase family. In terms of assembly, homotetramer. Requires Zn(2+) as cofactor.

Its subcellular location is the cytoplasm. It carries out the reaction tRNA(Ala) + L-alanine + ATP = L-alanyl-tRNA(Ala) + AMP + diphosphate. In terms of biological role, catalyzes the attachment of alanine to tRNA(Ala) in a two-step reaction: alanine is first activated by ATP to form Ala-AMP and then transferred to the acceptor end of tRNA(Ala). Also edits incorrectly charged Ser-tRNA(Ala) and Gly-tRNA(Ala) via its editing domain. This Salmonella paratyphi A (strain ATCC 9150 / SARB42) protein is Alanine--tRNA ligase.